The following is a 720-amino-acid chain: MTEPEITPELIAAHGLKPDEYQRILEIIGRAPTFTELGIFSAMWNEHCSYKSSKKWLRTLPTTGPQVICGPGENAGVVDIGDGQAVIFKMESHNHPSYIEPYQGAATGVGGILRDVFTMGARPIAAMNALSFGVPDHPKTAHIVKGVVEGIGGYGNAFGVPTVGGEVRFHRAYNGNCLVNAFAAGLADADRIFYSAASGVGMPVVYLGAKTGRDGVGGATMASAEFDDTIEEKRPTVQVGDPFTEKRLLEACLELMASDSVISIQDMGAAGLTCSAVEMGDKGDLGIRLQLDAVPQREANMTAYEMMLSESQERMLMVLKPEKEAVARAIFEKWDLDFAIVGETIPEDRFLILHGNEVKADLPLKALSGTAPEYDRPWIETPAAAPLGAVPEVDPIEGLKALIGSPSYAHKAWVWEQYDSQVMADTVRAPGLGAGVVRVHGTPKALAFTSDVTPRYVKANPFEGGKQAVAEAYRNLTAVGAKPLATTDNMNFGNPEKPEIMGQFVGAIKGIGAAVAALDMPIVSGNVSLYNETDGVGILPTPTIGAVGLLTSLDELIAGQPEEGDLALVIGTTAGHLGQSALLAEMFGREEGDAPPVDLEAEKRHGEFLRANRKLVRAAADLSDGGLALAAFEMAEAAGLGLTLTPSGTAALFGEDQARYLVACAPDRAEALQAAAEAAGVPLQEVGRFGGATVTLAGASAPLADLSRLYRRAFAEAIGG.

Histidine 47 is an active-site residue. ATP is bound by residues tyrosine 50 and lysine 89. Residue glutamate 91 coordinates Mg(2+). Residues 92 to 95 (SHNH) and arginine 114 contribute to the substrate site. Catalysis depends on histidine 93, which acts as the Proton acceptor. Aspartate 115 is a binding site for Mg(2+). A substrate-binding site is contributed by glutamine 238. Aspartate 266 is a binding site for Mg(2+). 310-312 (ESQ) serves as a coordination point for substrate. ATP is bound by residues aspartate 488 and glycine 525. Mg(2+) is bound at residue asparagine 526. Position 528 (serine 528) interacts with substrate.

Belongs to the FGAMS family. In terms of assembly, monomer. Part of the FGAM synthase complex composed of 1 PurL, 1 PurQ and 2 PurS subunits.

It localises to the cytoplasm. It catalyses the reaction N(2)-formyl-N(1)-(5-phospho-beta-D-ribosyl)glycinamide + L-glutamine + ATP + H2O = 2-formamido-N(1)-(5-O-phospho-beta-D-ribosyl)acetamidine + L-glutamate + ADP + phosphate + H(+). It functions in the pathway purine metabolism; IMP biosynthesis via de novo pathway; 5-amino-1-(5-phospho-D-ribosyl)imidazole from N(2)-formyl-N(1)-(5-phospho-D-ribosyl)glycinamide: step 1/2. Part of the phosphoribosylformylglycinamidine synthase complex involved in the purines biosynthetic pathway. Catalyzes the ATP-dependent conversion of formylglycinamide ribonucleotide (FGAR) and glutamine to yield formylglycinamidine ribonucleotide (FGAM) and glutamate. The FGAM synthase complex is composed of three subunits. PurQ produces an ammonia molecule by converting glutamine to glutamate. PurL transfers the ammonia molecule to FGAR to form FGAM in an ATP-dependent manner. PurS interacts with PurQ and PurL and is thought to assist in the transfer of the ammonia molecule from PurQ to PurL. The protein is Phosphoribosylformylglycinamidine synthase subunit PurL of Cereibacter sphaeroides (strain ATCC 17023 / DSM 158 / JCM 6121 / CCUG 31486 / LMG 2827 / NBRC 12203 / NCIMB 8253 / ATH 2.4.1.) (Rhodobacter sphaeroides).